A 101-amino-acid chain; its full sequence is Small ribosomal subunit protein uS14 (101 aa).

Residues 53–72 are disordered; the sequence is RDAAAVRVRNRDSHDGRPRG. Residues 61–70 show a composition bias toward basic and acidic residues; the sequence is RNRDSHDGRP.

It belongs to the universal ribosomal protein uS14 family. In terms of assembly, part of the 30S ribosomal subunit. Contacts proteins S3 and S10.

Binds 16S rRNA, required for the assembly of 30S particles and may also be responsible for determining the conformation of the 16S rRNA at the A site. The polypeptide is Small ribosomal subunit protein uS14 (Corynebacterium glutamicum (strain R)).